The chain runs to 268 residues: Hydroxyethylthiazole kinase (268 aa).

Met45 lines the substrate pocket. The ATP site is built by Arg121 and Thr167. Gly194 contributes to the substrate binding site.

Belongs to the Thz kinase family. It depends on Mg(2+) as a cofactor.

The catalysed reaction is 5-(2-hydroxyethyl)-4-methylthiazole + ATP = 4-methyl-5-(2-phosphooxyethyl)-thiazole + ADP + H(+). It functions in the pathway cofactor biosynthesis; thiamine diphosphate biosynthesis; 4-methyl-5-(2-phosphoethyl)-thiazole from 5-(2-hydroxyethyl)-4-methylthiazole: step 1/1. Its function is as follows. Catalyzes the phosphorylation of the hydroxyl group of 4-methyl-5-beta-hydroxyethylthiazole (THZ). This Bacillus thuringiensis (strain Al Hakam) protein is Hydroxyethylthiazole kinase.